The sequence spans 1495 residues: Ras GTPase-activating-like protein IQG1 (1495 aa).

One can recognise a Calponin-homology (CH) domain in the interval 108–221; sequence LCRVSEVKIW…ILISMINKKW (114 aa). Phosphothreonine is present on Thr264. The residue at position 268 (Ser268) is a Phosphoserine. Phosphothreonine is present on Thr299. 7 consecutive IQ domains span residues 447–467, 538–567, 568–597, 599–628, 629–658, 687–716, and 717–746; these read EQDI…VLSS, SHYP…KLND, ERES…AVHD, HKEN…SLGK, ENCN…PENN, EYNN…FYKR, and NVRS…CPNP. The stretch at 759-798 forms a coiled coil; sequence NGTATIEEVQNQLESCQASLDSENMKKERLLKSIRQQLNI. The Ras-GAP domain occupies 876–1100; sequence SYFTRFVCEM…PHIKDVLYNV (225 aa).

In terms of assembly, interacts with AFR1. Interacts with AKR1. Interacts with activated CDC42. Interacts with calmodulin CMD1. Interacts with myosin MYO1 and its light chain MLC1. Interacts with BUD4. Interacts with INN1. Interacts with SEC3. Interacts with TEM1.

The protein resides in the bud neck. In terms of biological role, required for the assembly and the contraction of the actomyosin ring at the bud neck during cytokinesis. Seems to be involved in additional tasks during cell division like axial bud-site selection and targeted secretion by recruiting the spatial landmark BUD4, the septin CDC12 and the secretion landmark SEC3 to the bud neck. May be regulated by calcium ions. The chain is Ras GTPase-activating-like protein IQG1 (IQG1) from Saccharomyces cerevisiae (strain ATCC 204508 / S288c) (Baker's yeast).